Reading from the N-terminus, the 155-residue chain is Small ribosomal subunit protein uS7cz/uS7cy (155 aa).

The protein belongs to the universal ribosomal protein uS7 family. In terms of assembly, part of the 30S ribosomal subunit.

The protein resides in the plastid. The protein localises to the chloroplast. Its function is as follows. One of the primary rRNA binding proteins, it binds directly to 16S rRNA where it nucleates assembly of the head domain of the 30S subunit. The protein is Small ribosomal subunit protein uS7cz/uS7cy (rps7-A) of Psilotum nudum (Whisk fern).